The sequence spans 111 residues: WAP four-disulfide core domain protein 12 (111 aa).

Positions 1–23 (MRSSRFLVLMVSLALVTLVASEG) are cleaved as a signal peptide. Residues 27–74 (NTEKPGVCPADNVRCIKSDPPQCHTDQDCQGIRKCCYLHCGFKCVIPV) form the WAP domain. Disulfide bonds link cysteine 34–cysteine 62, cysteine 41–cysteine 66, cysteine 49–cysteine 61, and cysteine 55–cysteine 70.

It is found in the secreted. In terms of biological role, antibacterial protein. Putative acid-stable proteinase inhibitor. The polypeptide is WAP four-disulfide core domain protein 12 (WFDC12) (Saimiri boliviensis boliviensis (Bolivian squirrel monkey)).